The following is a 417-amino-acid chain: Serine hydroxymethyltransferase 2 (417 aa).

Residues Leu-121 and 125 to 127 each bind (6S)-5,6,7,8-tetrahydrofolate; that span reads GHL. Lys-229 is subject to N6-(pyridoxal phosphate)lysine. A (6S)-5,6,7,8-tetrahydrofolate-binding site is contributed by 354-356; it reads SPF.

Belongs to the SHMT family. As to quaternary structure, homodimer. Pyridoxal 5'-phosphate is required as a cofactor.

It localises to the cytoplasm. It catalyses the reaction (6R)-5,10-methylene-5,6,7,8-tetrahydrofolate + glycine + H2O = (6S)-5,6,7,8-tetrahydrofolate + L-serine. The protein operates within one-carbon metabolism; tetrahydrofolate interconversion. Its pathway is amino-acid biosynthesis; glycine biosynthesis; glycine from L-serine: step 1/1. In terms of biological role, catalyzes the reversible interconversion of serine and glycine with tetrahydrofolate (THF) serving as the one-carbon carrier. This reaction serves as the major source of one-carbon groups required for the biosynthesis of purines, thymidylate, methionine, and other important biomolecules. Also exhibits THF-independent aldolase activity toward beta-hydroxyamino acids, producing glycine and aldehydes, via a retro-aldol mechanism. The sequence is that of Serine hydroxymethyltransferase 2 from Pseudomonas putida (strain ATCC 47054 / DSM 6125 / CFBP 8728 / NCIMB 11950 / KT2440).